A 432-amino-acid polypeptide reads, in one-letter code: Glutamate-1-semialdehyde 2,1-aminomutase (432 aa).

N6-(pyridoxal phosphate)lysine is present on Lys-272.

This sequence belongs to the class-III pyridoxal-phosphate-dependent aminotransferase family. HemL subfamily. As to quaternary structure, homodimer. Pyridoxal 5'-phosphate serves as cofactor.

The protein resides in the cytoplasm. It carries out the reaction (S)-4-amino-5-oxopentanoate = 5-aminolevulinate. The protein operates within porphyrin-containing compound metabolism; protoporphyrin-IX biosynthesis; 5-aminolevulinate from L-glutamyl-tRNA(Glu): step 2/2. It functions in the pathway porphyrin-containing compound metabolism; chlorophyll biosynthesis. This is Glutamate-1-semialdehyde 2,1-aminomutase from Picosynechococcus sp. (strain ATCC 27264 / PCC 7002 / PR-6) (Agmenellum quadruplicatum).